The chain runs to 138 residues: uncharacterized protein (138 aa).

35–42 (DFIGSFYN) serves as a coordination point for ATP.

This is an uncharacterized protein from Acanthamoeba polyphaga mimivirus (APMV).